Here is a 242-residue protein sequence, read N- to C-terminus: Argininosuccinate synthase (242 aa).

Belongs to the argininosuccinate synthase family. Type 2 subfamily. In terms of assembly, homotetramer.

The protein resides in the cytoplasm. The catalysed reaction is L-citrulline + L-aspartate + ATP = 2-(N(omega)-L-arginino)succinate + AMP + diphosphate + H(+). It functions in the pathway amino-acid biosynthesis; L-arginine biosynthesis; L-arginine from L-ornithine and carbamoyl phosphate: step 2/3. This chain is Argininosuccinate synthase (argG), found in Dickeya chrysanthemi (Pectobacterium chrysanthemi).